A 359-amino-acid chain; its full sequence is Alpha-N-acetylneuraminide alpha-2,8-sialyltransferase (359 aa).

Residues 1–28 (MWGRWRGAGGRRGVAQPVIPQMKLLGGR) are Cytoplasmic-facing. The chain crosses the membrane as a helical; Signal-anchor for type II membrane protein span at residues 29–49 (VPLGASALGLLIVCWFYIFPG). Residues 50–359 (GERLPGHKEM…KKDVSSKKPH (310 aa)) are Lumenal-facing. Residues Asn73 and Asn121 are each glycosylated (N-linked (GlcNAc...) asparagine). Intrachain disulfides connect Cys140/Cys289 and Cys154/Cys349. The CMP-N-acetyl-beta-neuraminate site is built by Asn145 and Asn168. An N-linked (GlcNAc...) asparagine glycan is attached at Asn247. CMP-N-acetyl-beta-neuraminate-binding residues include Ser276, Thr277, Gly278, Trp298, and His312. Residue His324 is the Proton donor/acceptor of the active site.

This sequence belongs to the glycosyltransferase 29 family. In terms of tissue distribution, expressed in the dorsal blastopore lip and in the presumptive neuroectoderm in stage 11 embryos. During gastrulation, strongly expressed in the involuting mesoderm. At stages 13 and 16, expressed in the neural plate and neural fold, paraxial mesoderm and notochord. At stages 19 and 22 (neural tube and early tailbud), strongly expressed in the neural tube and notochord. At the tadpole stage, expressed in the head region, branchial arches and otic and optic primordia. Also localized in the notochord and weakly expressed in the somites. In adults, expressed in the brain and ovary. Isoform 2 (short) is expressed at a low level in the adult testis and muscle, and at a high level in the skin. Isoform 1 (long) is expressed at a high level in the adult lung and kidney. Both isoforms 1 and 2 are expressed in the gut and liver.

The protein resides in the golgi apparatus membrane. The catalysed reaction is an N-acetyl-alpha-neuraminyl-(2-&gt;3)-beta-D-galactosyl derivative + CMP-N-acetyl-beta-neuraminate = an N-acetyl-alpha-neuraminyl-(2-&gt;8)-N-acetyl-alpha-neuraminyl-(2-&gt;3)-beta-D-galactosyl derivative + CMP + H(+). It carries out the reaction a ganglioside GM3 (d18:1(4E)) + CMP-N-acetyl-beta-neuraminate = a ganglioside GD3 (d18:1(4E)) + CMP + H(+). The enzyme catalyses a ganglioside GD3 (d18:1(4E)) + CMP-N-acetyl-beta-neuraminate = a ganglioside GT3 (d18:1(4E)) + CMP + H(+). It catalyses the reaction a ganglioside GD1a (d18:1(4E)) + CMP-N-acetyl-beta-neuraminate = a ganglioside GT1a (d18:1(4E)) + CMP + H(+). The catalysed reaction is a ganglioside GT1b (d18:1(4E)) + CMP-N-acetyl-beta-neuraminate = a ganglioside GQ1b (d18:1(4E)) + CMP + H(+). It carries out the reaction a ganglioside GM1b (d18:1(4E)) + CMP-N-acetyl-beta-neuraminate = a ganglioside GD1c (d18:1(4E)) + CMP + H(+). The enzyme catalyses a ganglioside GD3 + CMP-N-acetyl-beta-neuraminate = a ganglioside GT3 + CMP + H(+). It catalyses the reaction [alpha-N-acetylneuraminyl-(2-&gt;8)](n)-alpha-N-acetylneuraminyl-(2-&gt;8)-alpha-N-acetylneuraminyl-(2-&gt;3)-beta-D-galactosyl-(1-&gt;4)-beta-D-glucosyl-(1&lt;-&gt;1)-ceramide + CMP-N-acetyl-beta-neuraminate = [alpha-N-acetylneuraminyl-(2-&gt;8)](n+1)-alpha-N-acetylneuraminyl-(2-&gt;8)-alpha-N-acetylneuraminyl-(2-&gt;3)-beta-D-galactosyl-(1-&gt;4)-beta-D-glucosyl-(1&lt;-&gt;1)-ceramide + CMP + H(+). Its pathway is protein modification; protein glycosylation. It participates in lipid metabolism; sphingolipid metabolism. Catalyzes the addition of sialic acid in alpha 2,8-linkage to the sialic acid moiety of the ganglioside GM3 to form ganglioside GD3; gangliosides are a subfamily of complex glycosphingolipds that contain one or more residues of sialic acid. Glycosphingolipids are required for convergence extension movements during early development. Can catalyze the addition of a second alpha-2,8- sialic acid to GD3 to form GT3. Can use GM1b, GD1a and GT1b as acceptor substrates to synthesize GD1c, GT1a and GQ1b respectively. The polypeptide is Alpha-N-acetylneuraminide alpha-2,8-sialyltransferase (Xenopus laevis (African clawed frog)).